The sequence spans 168 residues: SPbeta prophage-derived uncharacterized protein YomW (168 aa).

The sequence is that of SPbeta prophage-derived uncharacterized protein YomW (yomW) from Bacillus subtilis (strain 168).